The chain runs to 231 residues: MAKKGKKYADALKLVDRDTAYQAEEALELVKKTSVAKFDETVEVAVRLGVDPKKADQQIRGAVVLPHGTGKTQRVLVFAKGEKAKEAEAAGADYVGEDDLINKINQGWFDFDVIVATPDMMAQVGRLGRVLGPKGLMPNPKTGTVTFDVTKAVEEIKAGKVEYRVDKSGNIHVPIGKVSFDTPKLLENFQTIVETLHKVKPAAAKGTYVKNIAVASTMGPGIRVTTTAFAK.

This sequence belongs to the universal ribosomal protein uL1 family. In terms of assembly, part of the 50S ribosomal subunit.

In terms of biological role, binds directly to 23S rRNA. The L1 stalk is quite mobile in the ribosome, and is involved in E site tRNA release. Its function is as follows. Protein L1 is also a translational repressor protein, it controls the translation of the L11 operon by binding to its mRNA. This Shouchella clausii (strain KSM-K16) (Alkalihalobacillus clausii) protein is Large ribosomal subunit protein uL1.